A 125-amino-acid polypeptide reads, in one-letter code: Thioredoxin H-type (125 aa).

A Thioredoxin domain is found at 2 to 112; the sequence is AEGNVFACHS…LERKVAALAA (111 aa). Catalysis depends on nucleophile residues cysteine 38 and cysteine 41. A disulfide bridge links cysteine 38 with cysteine 41.

Belongs to the thioredoxin family. Plant H-type subfamily.

The protein resides in the cytoplasm. Its function is as follows. Participates in various redox reactions through the reversible oxidation of the active center dithiol to a disulfide. The H form is known to activate a number of cytosolic enzymes. The protein is Thioredoxin H-type (SB09) of Picea mariana (Black spruce).